A 214-amino-acid chain; its full sequence is Putative 3-methyladenine DNA glycosylase (214 aa).

This sequence belongs to the DNA glycosylase MPG family.

The protein is Putative 3-methyladenine DNA glycosylase of Mycobacterium leprae (strain Br4923).